The sequence spans 553 residues: Solute carrier family 45 member 3 (553 aa).

The next 11 helical transmembrane spans lie at 19-39 (LLINLLTFGLEVCLAAGITYV), 52-72 (FMTMVLGIGPVLGLVSVPLLG), 88-108 (FIWALSLGILLSLFLIPRAGW), 120-140 (LELALLILGVGLLDFCGQVCF), 161-181 (YSVYAFMISLGGCLGYLLPAI), 198-218 (CLFGLLTLIFLTCVAATLLVA), 275-295 (FVAELCSWMALMTFTLFYTDF), 323-343 (MGSLGLFLQCAISLVFSLVMD), 353-373 (AVYLASVAAFPVAAGATCLSH), 382-402 (AALTGFTFSALQILPYTLASL), and 522-542 (AYMVSAAGLGLVAIYFATQVV).

It belongs to the glycoside-pentoside-hexuronide (GPH) cation symporter transporter (TC 2.A.2) family.

The protein localises to the membrane. It carries out the reaction sucrose(out) + H(+)(out) = sucrose(in) + H(+)(in). Its function is as follows. Proton-associated sucrose transporter. May be able to transport also glucose and fructose. In Macaca fascicularis (Crab-eating macaque), this protein is Solute carrier family 45 member 3 (SLC45A3).